Consider the following 1447-residue polypeptide: Regulator of G-protein signaling 12 (1447 aa).

Residues 1–21 are disordered; the sequence is MFRAGEASKRPLPGPSPPRVR. The 77-residue stretch at 22 to 98 folds into the PDZ domain; it reads SVEVARGRAG…GVLHMVIAEG (77 aa). A phosphoserine mark is found at S172 and S195. K196 participates in a covalent cross-link: Glycyl lysine isopeptide (Lys-Gly) (interchain with G-Cter in SUMO2). The PID domain maps to 228–340; the sequence is VAMIVGYLGS…GALRTSCHVF (113 aa). Disordered stretches follow at residues 410 to 429 and 443 to 482; these read ADAH…IGNF and LGGS…DPEG. Residues 413 to 425 show a composition bias toward polar residues; it reads HQNNSTSSNSDSG. Positions 451–464 are enriched in gly residues; the sequence is GPGGSAWDGVGGRG. R524 and R633 each carry omega-N-methylarginine. The interval 618–652 is disordered; the sequence is NVRKTKEDKKGSKFGRGTGLTQPSQRTSARRSFGR. Phosphoserine is present on residues S661 and S671. In terms of domain architecture, RGS spans 715-832; the sequence is SFERLLQDPV…LKSPLYQECI (118 aa). Polar residues predominate over residues 843–853; that stretch reads DSQQVPSSPAS. The tract at residues 843–941 is disordered; sequence DSQQVPSSPA…RESQGSVSSA (99 aa). Phosphoserine occurs at positions 850 and 879. Over residues 914–923 the composition is skewed to basic and acidic residues; the sequence is EHGDHADDAL. Phosphoserine is present on S943. 2 consecutive RBD domains span residues 962–1032 and 1034–1104; these read KHCC…LEKR and LFRL…LEEK. A compositionally biased stretch (basic and acidic residues) spans 1103-1117; the sequence is EKDPSRGKASADKQK. The interval 1103–1169 is disordered; sequence EKDPSRGKAS…RDPRLSKREE (67 aa). The span at 1122-1136 shows a compositional bias: polar residues; sequence KQNTAVNSSSRNHSA. Residues 1151–1169 show a composition bias toward basic and acidic residues; the sequence is IKGENGKNARDPRLSKREE. Residues 1187 to 1209 form the GoLoco domain; that stretch reads AEEFFELISKAQSNRADDQRGLL. The disordered stretch occupies residues 1240 to 1447; sequence GFSKRSATGN…KTSAHHATFV (208 aa). The segment covering 1244–1258 has biased composition (polar residues); the sequence is RSATGNGRESASQPG. Low complexity-rich tracts occupy residues 1267 to 1280 and 1289 to 1298; these read SSDS…SASS and PPGQKSPSGP. A compositionally biased stretch (polar residues) spans 1301-1313; sequence TPQSPVSLAQEGT.

Interacts with GNAI1. Interacts with GNAI2 and GNAI3; the interactions are GDP-dependent. In terms of tissue distribution, isoform 3 is brain specific.

It localises to the nucleus. It is found in the cytoplasm. The protein resides in the cell projection. The protein localises to the dendrite. Its subcellular location is the synapse. It localises to the nucleus matrix. Its function is as follows. Regulates G protein-coupled receptor signaling cascades. Inhibits signal transduction by increasing the GTPase activity of G protein alpha subunits, thereby driving them into their inactive GDP-bound form. Functionally, behaves as a cell cycle-dependent transcriptional repressor, promoting inhibition of S-phase DNA synthesis. The chain is Regulator of G-protein signaling 12 (RGS12) from Homo sapiens (Human).